A 220-amino-acid chain; its full sequence is Ribosomal RNA large subunit methyltransferase E (220 aa).

5 residues coordinate S-adenosyl-L-methionine: glycine 60, tryptophan 62, aspartate 92, aspartate 108, and aspartate 133. Lysine 173 (proton acceptor) is an active-site residue. Residues 197 to 220 (RKPKASRDKSSETFILGRQLKQPR) are disordered.

Belongs to the class I-like SAM-binding methyltransferase superfamily. RNA methyltransferase RlmE family.

It is found in the cytoplasm. It carries out the reaction uridine(2552) in 23S rRNA + S-adenosyl-L-methionine = 2'-O-methyluridine(2552) in 23S rRNA + S-adenosyl-L-homocysteine + H(+). Specifically methylates the uridine in position 2552 of 23S rRNA at the 2'-O position of the ribose in the fully assembled 50S ribosomal subunit. This chain is Ribosomal RNA large subunit methyltransferase E, found in Burkholderia ambifaria (strain ATCC BAA-244 / DSM 16087 / CCUG 44356 / LMG 19182 / AMMD) (Burkholderia cepacia (strain AMMD)).